Reading from the N-terminus, the 295-residue chain is Elongation factor Ts (295 aa).

The segment at 79-82 (TDFV) is involved in Mg(2+) ion dislocation from EF-Tu.

It belongs to the EF-Ts family.

Its subcellular location is the cytoplasm. Functionally, associates with the EF-Tu.GDP complex and induces the exchange of GDP to GTP. It remains bound to the aminoacyl-tRNA.EF-Tu.GTP complex up to the GTP hydrolysis stage on the ribosome. The chain is Elongation factor Ts from Bacillus mycoides (strain KBAB4) (Bacillus weihenstephanensis).